The primary structure comprises 618 residues: MELDDILDAGRGDRLFLLGNEAAVRAAIESGVGVASTYPGTPSSEIGNVLSKIAKRAGIYFEFSINEKVALEVAAAAAASGVRSFTFMKHVGLNVASDSFMSVAYTGVRAGMVVLSADDPSMFSSQNEQDNRHYARLAWVPLLEPSNPQEILEYMNHAFELSEEYRIPVLLRTTTRVSHMRGVVEAGERRAEPVKGFFRKNPEQFVPVPATARVMRRELVEKMKKLKRVADTSELNRVLNEDSESDLGIIASGGAFNYVYDALQTLGLDVPVLKLGFTYPFPAGLVAEFLSGLEGVLVVEEVDSVMEKEVLAVATSEGLDVGVHGKLDGTLPEIYEYSEDIVRRAISGLTGIKSHEKGIEAPELPERPPALCPGCPHRAMYYSVRRAASELGIEGEDLIFPTDIGCYTLGIEPPYSAADYLLSMGSSVGTACGFSAATSQRIVSFIGDSTFFHAGIPPLINAVHNRQRFVLVILDNRTTAMTGGQPHPGLPVDGMGEEAPAISIEDITRACGVEFVETVNPMNIRRSSETIRRALQHESVAVVISRYPCMLSEGAVRGRPVRVDEEKCDLCLECLNELACPAIVEEDGRVFIDPLYCRGCTICLQICPAGAIKPEGKR.

4Fe-4S ferredoxin-type domains lie at 559-590 (RPVRVDEEKCDLCLECLNELACPAIVEEDGRV) and 588-617 (GRVFIDPLYCRGCTICLQICPAGAIKPEGK). The [4Fe-4S] cluster site is built by cysteine 568, cysteine 571, cysteine 574, cysteine 580, cysteine 597, cysteine 600, cysteine 603, and cysteine 607.

Heterodimer of the IorA and IorB subunits. It depends on [4Fe-4S] cluster as a cofactor.

The enzyme catalyses indole-3-pyruvate + 2 oxidized [2Fe-2S]-[ferredoxin] + CoA = (indol-3-yl)acetyl-CoA + 2 reduced [2Fe-2S]-[ferredoxin] + CO2 + H(+). Functionally, catalyzes the ferredoxin-dependent oxidative decarboxylation of arylpyruvates. This is Indolepyruvate oxidoreductase subunit IorA (iorA) from Methanothermobacter marburgensis (strain ATCC BAA-927 / DSM 2133 / JCM 14651 / NBRC 100331 / OCM 82 / Marburg) (Methanobacterium thermoautotrophicum).